The primary structure comprises 274 residues: MEIRERILADMQVAETIDAHEEIRKSVEFLKAYLKKNTFLKSFVLGISGGQDSTLTGKLAQMAISEMRAETGDDEYRFFAVSLPYGTQLDESDRQDALNFMEPDNRLTVNIKASVDASVAALAEAGVELSDFAKGNEKARERMKVQYAIAAMHKGVVVGTDHSAEAVTGFYTKYGDGGTDINPLFRLNKRQGKALLKELGCPEHLYLKKPTADLEDNKPALPDEVALGVTYDQIDDYLEGKEVPADAAAKIENWFIKTEHKRHMAITIFDDFWK.

46–53 is an ATP binding site; sequence GISGGQDS. A Mg(2+)-binding site is contributed by Asp-52. Residue Arg-140 coordinates deamido-NAD(+). Thr-160 provides a ligand contact to ATP. Residue Glu-165 participates in Mg(2+) binding. Residues Lys-173 and Asp-180 each coordinate deamido-NAD(+). ATP is bound by residues Lys-189 and Thr-211. 260–261 serves as a coordination point for deamido-NAD(+); the sequence is HK.

Belongs to the NAD synthetase family. In terms of assembly, homodimer.

The enzyme catalyses deamido-NAD(+) + NH4(+) + ATP = AMP + diphosphate + NAD(+) + H(+). It functions in the pathway cofactor biosynthesis; NAD(+) biosynthesis; NAD(+) from deamido-NAD(+) (ammonia route): step 1/1. Its function is as follows. Catalyzes the ATP-dependent amidation of deamido-NAD to form NAD. Uses ammonia as a nitrogen source. This chain is NH(3)-dependent NAD(+) synthetase, found in Listeria monocytogenes serovar 1/2a (strain ATCC BAA-679 / EGD-e).